A 153-amino-acid chain; its full sequence is Fucose mutarotase (153 aa).

H24 serves as the catalytic Proton donor. D32 lines the substrate pocket. The active site involves D69. Residues M78, Y119, Y137, and N139 each contribute to the substrate site. Y119 is an active-site residue.

Belongs to the RbsD / FucU family.

The catalysed reaction is alpha-L-fucose = beta-L-fucose. Its function is as follows. Involved in the interconversion between alpha- and beta-L-fucoses. The chain is Fucose mutarotase (fuom) from Danio rerio (Zebrafish).